The primary structure comprises 205 residues: GTP cyclohydrolase-2 (205 aa).

49–53 (RVHSE) is a GTP binding site. Positions 54, 65, and 67 each coordinate Zn(2+). GTP-binding positions include Gln70, 92–94 (EGR), and Thr114. The Proton acceptor role is filled by Asp126. Arg128 acts as the Nucleophile in catalysis. Residues Thr149 and Lys154 each contribute to the GTP site.

The protein belongs to the GTP cyclohydrolase II family. The cofactor is Zn(2+).

The enzyme catalyses GTP + 4 H2O = 2,5-diamino-6-hydroxy-4-(5-phosphoribosylamino)-pyrimidine + formate + 2 phosphate + 3 H(+). It functions in the pathway cofactor biosynthesis; riboflavin biosynthesis; 5-amino-6-(D-ribitylamino)uracil from GTP: step 1/4. Its function is as follows. Catalyzes the conversion of GTP to 2,5-diamino-6-ribosylamino-4(3H)-pyrimidinone 5'-phosphate (DARP), formate and pyrophosphate. This is GTP cyclohydrolase-2 from Pseudomonas fluorescens (strain SBW25).